We begin with the raw amino-acid sequence, 358 residues long: MTINVKQKLGDLDLDMNVDLPMQGITSIFGRSGAGKTSLINILSGLTRPDEGYISLGKRVLYDSTNDVFLPPEKRRIGYVFQDARLFPHYTVMGNLHYGCDHKDPQHFNDIVTLLGIEHLLNRYPSSLSGGEKQRVAIGRALLIKPDMLLMDEPLASLDLPRKQELMPYLEMLAKEVNTPIVYVTHSLDEILRLADHMVMINQGKVVVSGNVNSVWGSLEMRPWLPAKEQSSLLTARVNLNHPKYALTQVMLSHNAYLWVSRVNQERGEWIRVRIHSNDVSLTRVKPEQTSIRNVLLARIDKIHIIEDDQKVEIKLRVGETHLWANITLWAADELALKVGDEVYAQIKGVSVTKDDLA.

The ABC transporter domain maps to 3 to 228 (INVKQKLGDL…LEMRPWLPAK (226 aa)). Position 30 to 37 (30 to 37 (GRSGAGKT)) interacts with ATP. In terms of domain architecture, Mop spans 289 to 356 (QTSIRNVLLA…IKGVSVTKDD (68 aa)).

This sequence belongs to the ABC transporter superfamily. Molybdate importer (TC 3.A.1.8) family. As to quaternary structure, the complex is composed of two ATP-binding proteins (ModC), two transmembrane proteins (ModB) and a solute-binding protein (ModA).

The protein localises to the cell inner membrane. The catalysed reaction is molybdate(out) + ATP + H2O = molybdate(in) + ADP + phosphate + H(+). Functionally, part of the ABC transporter complex ModABC involved in molybdenum import. Responsible for energy coupling to the transport system. The sequence is that of Molybdenum import ATP-binding protein ModC from Photobacterium profundum (strain SS9).